Consider the following 142-residue polypeptide: Organic hydroperoxide resistance protein-like 2 (142 aa).

Belongs to the OsmC/Ohr family.

The chain is Organic hydroperoxide resistance protein-like 2 from Staphylococcus epidermidis (strain ATCC 12228 / FDA PCI 1200).